A 113-amino-acid polypeptide reads, in one-letter code: MGGSVIVIDSKAAWDAQLAKGKEEHKPIVVDFTATWCGPCKMIAPLFETLSNDYAGKVIFLKVDVDAVAAVAEAAGITAMPTFHVYKDGVKADDLVGASQDKLKALVAKHAAA.

The 111-residue stretch at 2–112 (GGSVIVIDSK…LKALVAKHAA (111 aa)) folds into the Thioredoxin domain. Catalysis depends on nucleophile residues Cys37 and Cys40. A disulfide bridge connects residues Cys37 and Cys40.

It belongs to the thioredoxin family. Plant H-type subfamily.

The protein localises to the cytoplasm. In terms of biological role, participates in various redox reactions through the reversible oxidation of the active center dithiol to a disulfide. The H form is known to activate a number of cytosolic enzymes. This chain is Thioredoxin H-type (TRXH), found in Chlamydomonas reinhardtii (Chlamydomonas smithii).